A 172-amino-acid chain; its full sequence is Transmembrane protein 91 (172 aa).

Disordered stretches follow at residues 1-31 (MDSP…RHEL) and 55-83 (PSVS…DWDG). Topologically, residues 1 to 97 (MDSPSLRELQ…SPFLPHDHLG (97 aa)) are extracellular. A compositionally biased stretch (acidic residues) spans 69–81 (VEDMSSSDSDSDW). A helical membrane pass occupies residues 98–118 (LAVFSMLCCFWPVGIAAFCLA). Over 119 to 139 (QKTNKAWAKGDIQGAGAASRR) the chain is Cytoplasmic. A helical membrane pass occupies residues 140-160 (AFLLGVLAVGLGVCTYAAALV). At 161–172 (TLAAYLASRDPP) the chain is on the extracellular side.

It belongs to the CD225/Dispanin family.

The protein localises to the membrane. In Homo sapiens (Human), this protein is Transmembrane protein 91 (TMEM91).